The primary structure comprises 165 residues: Probable deoxyuridine 5'-triphosphate nucleotidohydrolase (165 aa).

Over residues 39–49 (GRIDTDGKTIG) the composition is skewed to basic and acidic residues. The interval 39–64 (GRIDTDGKTIGDRSPVTPTADEDSTD) is disordered.

The protein belongs to the dCTP deaminase family. Archaeal dUTPase subfamily.

It carries out the reaction dUTP + H2O = dUMP + diphosphate + H(+). The protein operates within pyrimidine metabolism; dUMP biosynthesis; dUMP from dCTP (dUTP route): step 2/2. In terms of biological role, this enzyme is involved in nucleotide metabolism: it produces dUMP, the immediate precursor of thymidine nucleotides and it decreases the intracellular concentration of dUTP so that uracil cannot be incorporated into DNA. This chain is Probable deoxyuridine 5'-triphosphate nucleotidohydrolase, found in Halobacterium salinarum (strain ATCC 29341 / DSM 671 / R1).